The following is a 174-amino-acid chain: UPF0398 protein llmg_0513 (174 aa).

This sequence belongs to the UPF0398 family.

The polypeptide is UPF0398 protein llmg_0513 (Lactococcus lactis subsp. cremoris (strain MG1363)).